A 532-amino-acid chain; its full sequence is MIQKVGIIGSGISGLSSYYYLRNGINLTSKFSKNNLKINIFEKSNKVGGNIQTRIIQGKNKDEKIIVEEGPRSLRALGRGLNTLEFIKRLGISNDIIFSSANSNGKFVLLDGKPKEIPMTSLFDIIKFSFKHSIVSSILKEPFKKVPSQVKEMDPNWDESVHDFFSRRLGKTMTKTFIEPTILGIYGGDYTNLSIKSTFKRAALLEPFGGLILGSLFKSKKQKQFELDLDKNEKRLLPSKNELTELFDKDTDKTNVFSFKENGLSRMIQKLKSLIESDSLTKLYLSTSIVEIEKDVTNGTLKVTDNKGNQYQYDQLISTIPLNQLAPMFKKSDSKLYQLLQSVNYTSIAVINLIYKSNKNVVKIISDKGFGYLVPSKENQSVIGVCFDSNTFPEFVNNNNNNNNDNDNGNEKDQSIITVMIGGNNGIKDRNDNWIDVTNTSKDKLLDIALKHLDKVLDIESSPDFTNVSIYDNGIPHYNIGHQNLINEIQNHITKNYGTTLLLGGNSIDGVGINDSIHKSKQLINSLKLSNN.

FAD-binding positions include 9-14 (GSGISG), Ile289, and 511-513 (VGI).

This sequence belongs to the protoporphyrinogen/coproporphyrinogen oxidase family. Protoporphyrinogen oxidase subfamily. The cofactor is FAD.

The protein resides in the mitochondrion. It catalyses the reaction protoporphyrinogen IX + 3 O2 = protoporphyrin IX + 3 H2O2. The protein operates within porphyrin-containing compound metabolism; protoporphyrin-IX biosynthesis; protoporphyrin-IX from protoporphyrinogen-IX: step 1/1. In terms of biological role, catalyzes the 6-electron oxidation of protoporphyrinogen-IX to form protoporphyrin-IX. The polypeptide is Protoporphyrinogen oxidase (ppox) (Dictyostelium discoideum (Social amoeba)).